The chain runs to 342 residues: MNTNDFDFELPEELIAQTPLEKRDSSKLLIIDHRQKTMVDSHFDHIIDQLNPGDALVMNNTRVLPARLYGEKPDTHGHVELLLLKNTQGDQWEVLAKPAKRLKVGSQVNFGDGHLKATIIDELEHGGRIVEFSYDGIFLEVLESLGEMPLPPYIHEKLEDAERYQTVYAKENGSAAAPTAGLHFTTDLLKKIEAKGVHLVYLTLHVGLGTFRPVSVDNLDEHDMHSEFYSLSEEAAQTLRDVKQAGGRVVAVGTTSIRTLETIGSKFQGDIQADSGWTNIFIKPGYQFKVVDAFSTNFHLPKSTLVMLVSAFAGRDFVLEAYRHAVDEKYRFFSFGDAMFVN.

This sequence belongs to the QueA family. In terms of assembly, monomer.

Its subcellular location is the cytoplasm. It catalyses the reaction 7-aminomethyl-7-carbaguanosine(34) in tRNA + S-adenosyl-L-methionine = epoxyqueuosine(34) in tRNA + adenine + L-methionine + 2 H(+). Its pathway is tRNA modification; tRNA-queuosine biosynthesis. In terms of biological role, transfers and isomerizes the ribose moiety from AdoMet to the 7-aminomethyl group of 7-deazaguanine (preQ1-tRNA) to give epoxyqueuosine (oQ-tRNA). This is S-adenosylmethionine:tRNA ribosyltransferase-isomerase from Streptococcus pyogenes serotype M3 (strain ATCC BAA-595 / MGAS315).